Here is a 911-residue protein sequence, read N- to C-terminus: Valine--tRNA ligase (911 aa).

Residues 53-63 carry the 'HIGH' region motif; that stretch reads PNVTGTLHLGH. Positions 533-537 match the 'KMSKS' region motif; the sequence is KMSKS. K536 is an ATP binding site. Residues 845 to 910 are a coiled coil; that stretch reads KEIERLTKEL…NRLAMLRSMQ (66 aa).

Belongs to the class-I aminoacyl-tRNA synthetase family. ValS type 1 subfamily. In terms of assembly, monomer.

It localises to the cytoplasm. The enzyme catalyses tRNA(Val) + L-valine + ATP = L-valyl-tRNA(Val) + AMP + diphosphate. Functionally, catalyzes the attachment of valine to tRNA(Val). As ValRS can inadvertently accommodate and process structurally similar amino acids such as threonine, to avoid such errors, it has a 'posttransfer' editing activity that hydrolyzes mischarged Thr-tRNA(Val) in a tRNA-dependent manner. The protein is Valine--tRNA ligase of Symbiobacterium thermophilum (strain DSM 24528 / JCM 14929 / IAM 14863 / T).